The chain runs to 226 residues: Ribose-5-phosphate isomerase A (226 aa).

Residues 26–29, 82–85, and 95–98 contribute to the substrate site; these read TGST, DGAD, and KGGG. E104 serves as the catalytic Proton acceptor. A substrate-binding site is contributed by K122.

It belongs to the ribose 5-phosphate isomerase family. As to quaternary structure, homodimer.

It carries out the reaction aldehydo-D-ribose 5-phosphate = D-ribulose 5-phosphate. It functions in the pathway carbohydrate degradation; pentose phosphate pathway; D-ribose 5-phosphate from D-ribulose 5-phosphate (non-oxidative stage): step 1/1. Its function is as follows. Catalyzes the reversible conversion of ribose-5-phosphate to ribulose 5-phosphate. The sequence is that of Ribose-5-phosphate isomerase A from Streptococcus thermophilus (strain ATCC BAA-250 / LMG 18311).